Consider the following 224-residue polypeptide: UPF0758 protein VS_0182 (224 aa).

The interval 1-21 (MPISKMPVESMPREKLLSRGP) is disordered. The MPN domain maps to 102-224 (ALTSPSHTKL…VISFAERGWI (123 aa)). Positions 173, 175, and 186 each coordinate Zn(2+). The JAMM motif motif lies at 173–186 (HNHPSGVAEPSQAD).

The protein belongs to the UPF0758 family.

This is UPF0758 protein VS_0182 from Vibrio atlanticus (strain LGP32) (Vibrio splendidus (strain Mel32)).